Consider the following 609-residue polypeptide: Dihydroxy-acid dehydratase 1 (609 aa).

Mg(2+) is bound at residue Asp81. Cys122 contributes to the [2Fe-2S] cluster binding site. Residues Asp123 and Lys124 each coordinate Mg(2+). Lys124 is modified (N6-carboxylysine). A [2Fe-2S] cluster-binding site is contributed by Cys195. Glu491 contacts Mg(2+). Ser517 functions as the Proton acceptor in the catalytic mechanism.

This sequence belongs to the IlvD/Edd family. In terms of assembly, homodimer. [2Fe-2S] cluster is required as a cofactor. Mg(2+) serves as cofactor.

The enzyme catalyses (2R)-2,3-dihydroxy-3-methylbutanoate = 3-methyl-2-oxobutanoate + H2O. It carries out the reaction (2R,3R)-2,3-dihydroxy-3-methylpentanoate = (S)-3-methyl-2-oxopentanoate + H2O. The protein operates within amino-acid biosynthesis; L-isoleucine biosynthesis; L-isoleucine from 2-oxobutanoate: step 3/4. It participates in amino-acid biosynthesis; L-valine biosynthesis; L-valine from pyruvate: step 3/4. Functionally, functions in the biosynthesis of branched-chain amino acids. Catalyzes the dehydration of (2R,3R)-2,3-dihydroxy-3-methylpentanoate (2,3-dihydroxy-3-methylvalerate) into 2-oxo-3-methylpentanoate (2-oxo-3-methylvalerate) and of (2R)-2,3-dihydroxy-3-methylbutanoate (2,3-dihydroxyisovalerate) into 2-oxo-3-methylbutanoate (2-oxoisovalerate), the penultimate precursor to L-isoleucine and L-valine, respectively. The sequence is that of Dihydroxy-acid dehydratase 1 from Acinetobacter baylyi (strain ATCC 33305 / BD413 / ADP1).